Here is a 738-residue protein sequence, read N- to C-terminus: 1,4-alpha-glucan branching enzyme GlgB (738 aa).

Asp399 serves as the catalytic Nucleophile. Glu452 functions as the Proton donor in the catalytic mechanism.

Belongs to the glycosyl hydrolase 13 family. GlgB subfamily. In terms of assembly, monomer.

The enzyme catalyses Transfers a segment of a (1-&gt;4)-alpha-D-glucan chain to a primary hydroxy group in a similar glucan chain.. It functions in the pathway glycan biosynthesis; glycogen biosynthesis. Its function is as follows. Catalyzes the formation of the alpha-1,6-glucosidic linkages in glycogen by scission of a 1,4-alpha-linked oligosaccharide from growing alpha-1,4-glucan chains and the subsequent attachment of the oligosaccharide to the alpha-1,6 position. This is 1,4-alpha-glucan branching enzyme GlgB from Chlamydia trachomatis serovar D (strain ATCC VR-885 / DSM 19411 / UW-3/Cx).